The chain runs to 880 residues: Envelope glycoprotein gp160 (880 aa).

Positions 1 to 35 (MKAMETQRNCRTLSLKEIILCTLVLGIIGIIKCED) are cleaved as a signal peptide. Over 36-701 (NMWVTVYYGV…ITSWLWYIKI (666 aa)) the chain is Extracellular. An intrachain disulfide couples cysteine 57 to cysteine 77. N-linked (GlcNAc...) asparagine; by host glycans are attached at residues asparagine 91, asparagine 133, asparagine 145, asparagine 148, asparagine 157, asparagine 163, asparagine 173, asparagine 177, asparagine 221, asparagine 256, asparagine 265, asparagine 286, asparagine 299, asparagine 312, asparagine 318, asparagine 324, asparagine 356, asparagine 372, and asparagine 381. Cystine bridges form between cysteine 122–cysteine 229, cysteine 129–cysteine 220, cysteine 134–cysteine 174, cysteine 242–cysteine 271, and cysteine 252–cysteine 263. The V1 stretch occupies residues 134 to 173 (CSLFKCIKENGNTTNCTVQISTGNDSTANNITVGTIDMYN). A V2 region spans residues 174–220 (CSFNATTELRDRKKQVYSLFYRQDLEPLEGNKPPEGDKNALYRLYNC). The segment at 319–352 (CTRTGNNTIKGIPIGPSQIFYGIETVIGDTRQAF) is V3. Residues cysteine 319 and cysteine 353 are joined by a disulfide bond. The tract at residues 389–399 (STGGDLEVTNL) is CD4-binding loop. 2 cysteine pairs are disulfide-bonded: cysteine 403–cysteine 461 and cysteine 410–cysteine 434. A V4 region spans residues 410 to 434 (CNTSILFNTSIIFNETKDDNITIPC). N-linked (GlcNAc...) asparagine; by host glycans are attached at residues asparagine 411, asparagine 417, asparagine 423, asparagine 429, asparagine 464, and asparagine 479. A V5 region spans residues 479–487 (NKSAMFTPV). Residues 528-549 (AAVGLGALFLGFLGAAGSTMGA) form a fusion peptide region. The segment at 591–609 (KQLQARVLAVERYLKDQQL) is immunosuppression. The cysteines at positions 615 and 621 are disulfide-linked. Asparagine 628, asparagine 633, asparagine 642, and asparagine 654 each carry an N-linked (GlcNAc...) asparagine; by host glycan. Residues 650–684 (KEVSNYTDVIYNLLEKAQTQQENNEKELLELDKWA) are a coiled coil. Residues 679-700 (ELDKWASLWNWFDITSWLWYIK) form an MPER; binding to GalCer region. The helical transmembrane segment at 702–722 (FIIIVGGLIGLRIVFALLSIV) threads the bilayer. Over 723 to 880 (NRVRQGYSPL…IRQGLERALL (158 aa)) the chain is Cytoplasmic. The short motif at 729–732 (YSPL) is the YXXL motif; contains endocytosis signal element. Cysteine 781 carries the S-palmitoyl cysteine; by host lipid modification. Positions 879-880 (LL) match the Di-leucine internalization motif motif.

It belongs to the HIV-1 env protein family. As to quaternary structure, the mature envelope protein (Env) consists of a homotrimer of non-covalently associated gp120-gp41 heterodimers. The resulting complex protrudes from the virus surface as a spike. There seems to be as few as 10 spikes on the average virion. Interacts with host CD4, CCR5 and CXCR4. Gp120 also interacts with the C-type lectins CD209/DC-SIGN and CLEC4M/DC-SIGNR (collectively referred to as DC-SIGN(R)). Gp120 and gp41 interact with GalCer. Gp120 interacts with host ITGA4/ITGB7 complex; on CD4+ T-cells, this interaction results in rapid activation of integrin ITGAL/LFA-1, which facilitates efficient cell-to-cell spreading of HIV-1. Gp120 interacts with cell-associated heparan sulfate; this interaction increases virus infectivity on permissive cells and may be involved in infection of CD4- cells. The mature envelope protein (Env) consists of a homotrimer of non-covalently associated gp120-gp41 heterodimers. The resulting complex protrudes from the virus surface as a spike. There seems to be as few as 10 spikes on the average virion. Highly glycosylated by host. The high number of glycan on the protein is reffered to as 'glycan shield' because it contributes to hide protein sequence from adaptive immune system. In terms of processing, palmitoylation of the transmembrane protein and of Env polyprotein (prior to its proteolytic cleavage) is essential for their association with host cell membrane lipid rafts. Palmitoylation is therefore required for envelope trafficking to classical lipid rafts, but not for viral replication. Post-translationally, specific enzymatic cleavages in vivo yield mature proteins. Envelope glycoproteins are synthesized as an inactive precursor that is heavily N-glycosylated and processed likely by host cell furin in the Golgi to yield the mature SU and TM proteins. The cleavage site between SU and TM requires the minimal sequence [KR]-X-[KR]-R. About 2 of the 9 disulfide bonds of gp41 are reduced by P4HB/PDI, following binding to CD4 receptor.

It localises to the virion membrane. It is found in the host cell membrane. The protein localises to the host endosome membrane. Functionally, attaches the virus to the host lymphoid cell by binding to the primary receptor CD4. This interaction induces a structural rearrangement creating a high affinity binding site for a chemokine coreceptor like CXCR4 and/or CCR5. Acts as a ligand for CD209/DC-SIGN and CLEC4M/DC-SIGNR, which are respectively found on dendritic cells (DCs), and on endothelial cells of liver sinusoids and lymph node sinuses. These interactions allow capture of viral particles at mucosal surfaces by these cells and subsequent transmission to permissive cells. HIV subverts the migration properties of dendritic cells to gain access to CD4+ T-cells in lymph nodes. Virus transmission to permissive T-cells occurs either in trans (without DCs infection, through viral capture and transmission), or in cis (following DCs productive infection, through the usual CD4-gp120 interaction), thereby inducing a robust infection. In trans infection, bound virions remain infectious over days and it is proposed that they are not degraded, but protected in non-lysosomal acidic organelles within the DCs close to the cell membrane thus contributing to the viral infectious potential during DCs' migration from the periphery to the lymphoid tissues. On arrival at lymphoid tissues, intact virions recycle back to DCs' cell surface allowing virus transmission to CD4+ T-cells. In terms of biological role, acts as a class I viral fusion protein. Under the current model, the protein has at least 3 conformational states: pre-fusion native state, pre-hairpin intermediate state, and post-fusion hairpin state. During fusion of viral and target intracellular membranes, the coiled coil regions (heptad repeats) assume a trimer-of-hairpins structure, positioning the fusion peptide in close proximity to the C-terminal region of the ectodomain. The formation of this structure appears to drive apposition and subsequent fusion of viral and target cell membranes. Complete fusion occurs in host cell endosomes and is dynamin-dependent, however some lipid transfer might occur at the plasma membrane. The virus undergoes clathrin-dependent internalization long before endosomal fusion, thus minimizing the surface exposure of conserved viral epitopes during fusion and reducing the efficacy of inhibitors targeting these epitopes. Membranes fusion leads to delivery of the nucleocapsid into the cytoplasm. Oligomerizes in the host endoplasmic reticulum into predominantly trimers. In a second time, gp160 transits in the host Golgi, where glycosylation is completed. The precursor is then proteolytically cleaved in the trans-Golgi and thereby activated by cellular furin or furin-like proteases to produce gp120 and gp41. The polypeptide is Envelope glycoprotein gp160 (Pan troglodytes (Chimpanzee)).